A 60-amino-acid polypeptide reads, in one-letter code: MPIVCFDPPYELYLHWPLAGEVQSQYWGTGDRGISGAHWPAPGSLREAVSEKKKIIKKDT.

The protein is Putative per-hexamer repeat protein 1 (Phxr1) of Mus musculus (Mouse).